The sequence spans 260 residues: Putative ABC transporter ATP-binding protein SCO3161 (260 aa).

The ABC transporter domain maps to 16–246 (LDVSGLAFAY…DDLMRAHRLE (231 aa)). 49-56 (GPNGAGKT) lines the ATP pocket.

It belongs to the ABC transporter superfamily.

Its subcellular location is the cell membrane. Probably part of an ABC transporter complex. Responsible for energy coupling to the transport system. In Streptomyces coelicolor (strain ATCC BAA-471 / A3(2) / M145), this protein is Putative ABC transporter ATP-binding protein SCO3161.